The chain runs to 1455 residues: Cleavage and polyadenylation specificity factor subunit 1 (1455 aa).

The protein belongs to the CPSF1 family. Component of the cleavage and polyadenylation specificity factor (CPSF) complex, composed of at least Clp, Cpsf73, Cpsf100 and Cpsf160.

It localises to the nucleus. Its function is as follows. Component of the cleavage and polyadenylation specificity factor (CPSF) complex that plays a key role in pre-mRNA 3'-end formation, recognizing the AAUAAA signal sequence and interacting with poly(A) polymerase and other factors to bring about cleavage and poly(A) addition. This subunit is involved in the RNA recognition step of the polyadenylation reaction. This Drosophila melanogaster (Fruit fly) protein is Cleavage and polyadenylation specificity factor subunit 1 (Cpsf160).